A 429-amino-acid chain; its full sequence is Glutamyl-tRNA reductase (429 aa).

Residues T49–R52, S108, E113–Q115, and Q119 each bind substrate. The active-site Nucleophile is C50. G188–S193 is a binding site for NADP(+).

The protein belongs to the glutamyl-tRNA reductase family. In terms of assembly, homodimer.

It catalyses the reaction (S)-4-amino-5-oxopentanoate + tRNA(Glu) + NADP(+) = L-glutamyl-tRNA(Glu) + NADPH + H(+). It functions in the pathway porphyrin-containing compound metabolism; protoporphyrin-IX biosynthesis; 5-aminolevulinate from L-glutamyl-tRNA(Glu): step 1/2. Functionally, catalyzes the NADPH-dependent reduction of glutamyl-tRNA(Glu) to glutamate 1-semialdehyde (GSA). This is Glutamyl-tRNA reductase from Rubrobacter xylanophilus (strain DSM 9941 / JCM 11954 / NBRC 16129 / PRD-1).